A 335-amino-acid polypeptide reads, in one-letter code: Glutaredoxin-3 (335 aa).

Ala-2 carries the N-acetylalanine modification. Residues 2–117 enclose the Thioredoxin domain; sequence AAGAAEAAVA…LTKKVQRHAS (116 aa). Residues Ser-117 and Ser-120 each carry the phosphoserine modification. Glutaredoxin domains lie at 144 to 236 and 237 to 335; these read APCM…PKLE and ERLK…RGEN. Residues Cys-159 and Cys-261 each contribute to the [2Fe-2S] cluster site.

Homodimer; the homodimer is independent of 2Fe-2S clusters. Heterotrimer; forms a heterotrimeric complex composed by two BOLA2 molecules and one GLRX3 molecule; linked by [2Fe-2S] clusters. Interacts (via N-terminus) with PRKCQ/PKC-theta. Interacts (via C-terminus) with CSRP3. Interacts with CSRP2. Expressed in heart, spleen, testis and, to a lower extent, in thymus and peripheral blood leukocytes. Weakly expressed in lung, placenta, colon and small intestine.

The protein localises to the cytoplasm. It is found in the cytosol. It localises to the cell cortex. Its subcellular location is the myofibril. The protein resides in the sarcomere. The protein localises to the z line. Together with BOLA2, acts as a cytosolic iron-sulfur (Fe-S) cluster assembly factor that facilitates [2Fe-2S] cluster insertion into a subset of cytosolic proteins. Acts as a critical negative regulator of cardiac hypertrophy and a positive inotropic regulator. Required for hemoglobin maturation. Does not possess any thyoredoxin activity since it lacks the conserved motif that is essential for catalytic activity. This Homo sapiens (Human) protein is Glutaredoxin-3 (GLRX3).